Consider the following 789-residue polypeptide: Phenylalanine--tRNA ligase beta subunit (789 aa).

In terms of domain architecture, tRNA-binding spans 38–151 (KKHLQSFVVV…NTYNVGESFF (114 aa)). Residues 398–474 (HNDILLNFSP…RLYGYDKILE (77 aa)) enclose the B5 domain. Residues Asp452, Asp458, Glu461, and Glu462 each contribute to the Mg(2+) site. The region spanning 694 to 787 (LRYQSVKRDF…ISKGFNGILR (94 aa)) is the FDX-ACB domain.

Belongs to the phenylalanyl-tRNA synthetase beta subunit family. Type 1 subfamily. Tetramer of two alpha and two beta subunits. The cofactor is Mg(2+).

Its subcellular location is the cytoplasm. The enzyme catalyses tRNA(Phe) + L-phenylalanine + ATP = L-phenylalanyl-tRNA(Phe) + AMP + diphosphate + H(+). This is Phenylalanine--tRNA ligase beta subunit from Ehrlichia ruminantium (strain Welgevonden).